The primary structure comprises 291 residues: Elongation factor Ts (291 aa).

The interval 79-82 (TDFV) is involved in Mg(2+) ion dislocation from EF-Tu.

It belongs to the EF-Ts family.

It is found in the cytoplasm. Its function is as follows. Associates with the EF-Tu.GDP complex and induces the exchange of GDP to GTP. It remains bound to the aminoacyl-tRNA.EF-Tu.GTP complex up to the GTP hydrolysis stage on the ribosome. The protein is Elongation factor Ts of Anaplasma marginale (strain St. Maries).